Consider the following 591-residue polypeptide: CTP synthase (591 aa).

Residues 1–281 (MPQSRTHSRT…DAYVVRQLGL (281 aa)) form an amidoligase domain region. A CTP-binding site is contributed by S23. S23 contributes to the UTP binding site. Residues 24-29 (SLGKGL) and D81 each bind ATP. Residues D81 and E155 each coordinate Mg(2+). Residues 162-164 (DIE), 202-207 (KTKPTQ), and K238 each bind CTP. Residues 202 to 207 (KTKPTQ) and K238 each bind UTP. The Glutamine amidotransferase type-1 domain occupies 306 to 554 (RIALVGKYVD…VDAALKHKLE (249 aa)). G369 contacts L-glutamine. C396 acts as the Nucleophile; for glutamine hydrolysis in catalysis. L-glutamine is bound by residues 397-400 (LGLQ), E419, and R480. Active-site residues include H527 and E529. The interval 568-591 (AVATDDELADSADRDEVASVDSAG) is disordered.

Belongs to the CTP synthase family. As to quaternary structure, homotetramer.

It carries out the reaction UTP + L-glutamine + ATP + H2O = CTP + L-glutamate + ADP + phosphate + 2 H(+). The catalysed reaction is L-glutamine + H2O = L-glutamate + NH4(+). It catalyses the reaction UTP + NH4(+) + ATP = CTP + ADP + phosphate + 2 H(+). The protein operates within pyrimidine metabolism; CTP biosynthesis via de novo pathway; CTP from UDP: step 2/2. With respect to regulation, allosterically activated by GTP, when glutamine is the substrate; GTP has no effect on the reaction when ammonia is the substrate. The allosteric effector GTP functions by stabilizing the protein conformation that binds the tetrahedral intermediate(s) formed during glutamine hydrolysis. Inhibited by the product CTP, via allosteric rather than competitive inhibition. Functionally, catalyzes the ATP-dependent amination of UTP to CTP with either L-glutamine or ammonia as the source of nitrogen. Regulates intracellular CTP levels through interactions with the four ribonucleotide triphosphates. The sequence is that of CTP synthase from Rhodococcus jostii (strain RHA1).